Here is a 399-residue protein sequence, read N- to C-terminus: Subtilisin-like protease 4 (399 aa).

A signal peptide spans 1 to 19 (MVCLKTLSVFLAAFAAADA). A propeptide spanning residues 20–118 (RAVFKTQGHK…VEQDQVVRIS (99 aa)) is cleaved from the precursor. The 80-residue stretch at 38-117 (YIVVMKDGVS…YVEQDQVVRI (80 aa)) folds into the Inhibitor I9 domain. An N-linked (GlcNAc...) asparagine glycan is attached at Asn-102. The 272-residue stretch at 128-399 (SWGLGRVSHR…NRLLYNGSGQ (272 aa)) folds into the Peptidase S8 domain. Active-site charge relay system residues include Asp-160 and His-191. 2 N-linked (GlcNAc...) asparagine glycosylation sites follow: Asn-252 and Asn-308. The active-site Charge relay system is the Ser-346. An N-linked (GlcNAc...) asparagine glycan is attached at Asn-395.

The protein belongs to the peptidase S8 family.

The protein localises to the secreted. Secreted subtilisin-like serine protease with keratinolytic activity that contributes to pathogenicity. The polypeptide is Subtilisin-like protease 4 (SUB4) (Trichophyton rubrum (Athlete's foot fungus)).